The chain runs to 396 residues: Ornithine aminotransferase 2 (396 aa).

N6-(pyridoxal phosphate)lysine is present on K255.

It belongs to the class-III pyridoxal-phosphate-dependent aminotransferase family. OAT subfamily. It depends on pyridoxal 5'-phosphate as a cofactor.

Its subcellular location is the cytoplasm. The catalysed reaction is a 2-oxocarboxylate + L-ornithine = L-glutamate 5-semialdehyde + an L-alpha-amino acid. It functions in the pathway amino-acid biosynthesis; L-proline biosynthesis; L-glutamate 5-semialdehyde from L-ornithine: step 1/1. Functionally, catalyzes the interconversion of ornithine to glutamate semialdehyde. In Staphylococcus aureus (strain COL), this protein is Ornithine aminotransferase 2.